A 318-amino-acid polypeptide reads, in one-letter code: NADH-ubiquinone oxidoreductase chain 1 (318 aa).

Helical transmembrane passes span 2-22, 68-88, 102-122, 146-166, 171-191, 217-237, 253-273, and 294-314; these read FLMNLLLLIIPILVAMAFLTL, ISLFIIAPSLALTLAFTMWIP, ILFILATSSLAVYTILWSGWA, LAIILLSVLLLNGSFTLSSLI, FTWLLLPTWPLAMMWFISTLA, AGPFALFFMAEYTNIIMMNAL, EMFTFSFTLKTLMLTATFLWI, and LPLTLALCMWHISLPVIMACI.

Belongs to the complex I subunit 1 family.

It is found in the mitochondrion inner membrane. The enzyme catalyses a ubiquinone + NADH + 5 H(+)(in) = a ubiquinol + NAD(+) + 4 H(+)(out). In terms of biological role, core subunit of the mitochondrial membrane respiratory chain NADH dehydrogenase (Complex I) that is believed to belong to the minimal assembly required for catalysis. Complex I functions in the transfer of electrons from NADH to the respiratory chain. The immediate electron acceptor for the enzyme is believed to be ubiquinone. The protein is NADH-ubiquinone oxidoreductase chain 1 (MT-ND1) of Tamias sibiricus (Siberian chipmunk).